Here is a 452-residue protein sequence, read N- to C-terminus: Maltoporin (452 aa).

The N-terminal stretch at 1-25 (MMITLRKLPLAVAVAAGVMSAQAMA) is a signal peptide.

It belongs to the porin LamB (TC 1.B.3) family. As to quaternary structure, homotrimer formed of three 18-stranded antiparallel beta-barrels, containing three independent channels.

The protein resides in the cell outer membrane. It catalyses the reaction beta-maltose(in) = beta-maltose(out). Its function is as follows. Involved in the transport of maltose and maltodextrins. In Salmonella enteritidis PT4 (strain P125109), this protein is Maltoporin.